The sequence spans 146 residues: Large ribosomal subunit protein uL15 (146 aa).

The segment covering Met-1–Arg-18 has biased composition (basic and acidic residues). Positions Met-1–Pro-69 are disordered. The segment covering Ser-42–Gly-52 has biased composition (gly residues).

This sequence belongs to the universal ribosomal protein uL15 family. In terms of assembly, part of the 50S ribosomal subunit.

Functionally, binds to the 23S rRNA. The polypeptide is Large ribosomal subunit protein uL15 (Exiguobacterium sp. (strain ATCC BAA-1283 / AT1b)).